Reading from the N-terminus, the 822-residue chain is Tubulin polyglutamylase TTLL6 (822 aa).

Positions 1-24 (MLQCLTSESEEGAEEREESSTEDL) are disordered. Over residues 8–24 (ESEEGAEEREESSTEDL) the composition is skewed to acidic residues. The TTL domain maps to 57–400 (KKRLVINLSN…GNCDKKKVLE (344 aa)). Residues Lys-174, 180–181 (QG), 202–205 (QLYI), and 215–217 (KFD) contribute to the ATP site. Residue Gln-180 coordinates a protein. Arg-241 is an L-glutamate binding site. Position 263-264 (263-264 (TN)) interacts with ATP. Residues Tyr-265, Ser-266, and Lys-283 each contribute to the L-glutamate site. Residues Asp-346, Glu-359, and Asn-361 each coordinate Mg(2+). His-362 serves as a coordination point for a protein. A c-MTBD region region spans residues 371–450 (KLDKEVKDSL…CGGFRLIYPG (80 aa)). Lys-377 is an L-glutamate binding site. Disordered regions lie at residues 736-772 (PLFP…SVFV) and 791-822 (TQAR…TATA). Polar residues predominate over residues 802-814 (SHSGTTTRDSSTQ).

The protein belongs to the tubulin--tyrosine ligase family. In terms of assembly, found in a complex with CEP41. It depends on Mg(2+) as a cofactor. As to expression, highly expressed in testis. Expressed in brain, heart, kidney, liver, lung, muscle and trachea. In the brain, specifically expressed in ependymal cilia.

Its subcellular location is the cytoplasm. The protein localises to the cytoskeleton. It is found in the cilium axoneme. The protein resides in the cilium basal body. The catalysed reaction is L-glutamyl-[protein] + L-glutamate + ATP = gamma-L-glutamyl-L-glutamyl-[protein] + ADP + phosphate + H(+). The enzyme catalyses (L-glutamyl)(n)-gamma-L-glutamyl-L-glutamyl-[protein] + L-glutamate + ATP = (L-glutamyl)(n+1)-gamma-L-glutamyl-L-glutamyl-[protein] + ADP + phosphate + H(+). Functionally, polyglutamylase which modifies both tubulin and non-tubulin proteins, generating alpha-linked polyglutamate side chains on the gamma-carboxyl group of specific glutamate residues of target proteins. Preferentially mediates ATP-dependent long polyglutamate chain elongation over the initiation step of the polyglutamylation reaction. Preferentially modifies the alpha-tubulin tail over a beta-tail. Promotes tubulin polyglutamylation which stimulates spastin/SPAST-mediated microtubule severing, thereby regulating microtubule functions. Mediates microtubule polyglutamylation in primary cilia axoneme which is important for ciliary structural formation and motility. Mediates microtubule polyglutamylation in motile cilia, necessary for the regulation of ciliary coordinated beating. Polyglutamylates non-tubulin protein nucleotidyltransferase CGAS, leading to CGAS DNA-binding inhibition, thereby preventing antiviral defense response. The chain is Tubulin polyglutamylase TTLL6 from Mus musculus (Mouse).